The primary structure comprises 437 residues: Probable glycine dehydrogenase (decarboxylating) subunit 1 (437 aa).

This sequence belongs to the GcvP family. N-terminal subunit subfamily. In terms of assembly, the glycine cleavage system is composed of four proteins: P, T, L and H. In this organism, the P 'protein' is a heterodimer of two subunits.

It catalyses the reaction N(6)-[(R)-lipoyl]-L-lysyl-[glycine-cleavage complex H protein] + glycine + H(+) = N(6)-[(R)-S(8)-aminomethyldihydrolipoyl]-L-lysyl-[glycine-cleavage complex H protein] + CO2. Functionally, the glycine cleavage system catalyzes the degradation of glycine. The P protein binds the alpha-amino group of glycine through its pyridoxal phosphate cofactor; CO(2) is released and the remaining methylamine moiety is then transferred to the lipoamide cofactor of the H protein. In Thermotoga petrophila (strain ATCC BAA-488 / DSM 13995 / JCM 10881 / RKU-1), this protein is Probable glycine dehydrogenase (decarboxylating) subunit 1.